A 577-amino-acid polypeptide reads, in one-letter code: Arginine--tRNA ligase (577 aa).

A 'HIGH' region motif is present at residues 123–133; it reads PNLAKEMHVGH.

Belongs to the class-I aminoacyl-tRNA synthetase family. As to quaternary structure, monomer.

Its subcellular location is the cytoplasm. The catalysed reaction is tRNA(Arg) + L-arginine + ATP = L-arginyl-tRNA(Arg) + AMP + diphosphate. The polypeptide is Arginine--tRNA ligase (Marinomonas sp. (strain MWYL1)).